Reading from the N-terminus, the 452-residue chain is Lichenan permease IIC component (452 aa).

One can recognise a PTS EIIC type-3 domain in the interval Leu8–Phe421. 10 helical membrane-spanning segments follow: residues Gly31–Leu51, Leu72–Ala92, Leu104–Phe124, Gly138–Val158, Phe187–Val207, Ile218–Leu238, Leu246–Trp266, Phe291–Met311, Leu351–Gly373, and Ser402–Phe422.

The protein resides in the cell membrane. Functionally, the phosphoenolpyruvate-dependent sugar phosphotransferase system (PTS), a major carbohydrate active -transport system, catalyzes the phosphorylation of incoming sugar substrates concomitant with their translocation across the cell membrane. This system is involved in lichenan transport. This Bacillus subtilis (strain 168) protein is Lichenan permease IIC component (licC).